Reading from the N-terminus, the 327-residue chain is Thiamine-monophosphate kinase (327 aa).

Aspartate 30, serine 45, serine 46, and aspartate 47 together coordinate Mg(2+). Histidine 54 is a substrate binding site. Residue aspartate 76 coordinates Mg(2+). Residues tyrosine 106, 123–124, and arginine 149 contribute to the ATP site; that span reads GD. Aspartate 124 lines the Mg(2+) pocket. Aspartate 221 is a binding site for Mg(2+). Serine 223 contacts ATP. Mg(2+) is bound at residue aspartate 224. Positions 268 and 321 each coordinate substrate.

The protein belongs to the thiamine-monophosphate kinase family.

The catalysed reaction is thiamine phosphate + ATP = thiamine diphosphate + ADP. The protein operates within cofactor biosynthesis; thiamine diphosphate biosynthesis; thiamine diphosphate from thiamine phosphate: step 1/1. In terms of biological role, catalyzes the ATP-dependent phosphorylation of thiamine-monophosphate (TMP) to form thiamine-pyrophosphate (TPP), the active form of vitamin B1. In Synechococcus elongatus (strain ATCC 33912 / PCC 7942 / FACHB-805) (Anacystis nidulans R2), this protein is Thiamine-monophosphate kinase.